The sequence spans 167 residues: UPF0179 protein Pisl_0688 (167 aa).

This sequence belongs to the UPF0179 family.

The chain is UPF0179 protein Pisl_0688 from Pyrobaculum islandicum (strain DSM 4184 / JCM 9189 / GEO3).